We begin with the raw amino-acid sequence, 143 residues long: Antitumor antibiotic C-1027 apoprotein (143 aa).

Positions 1 to 33 are cleaved as a signal peptide; that stretch reads MSLRHMSRRASRFGVVAVASIGLAAAAQSVAFA. Cystine bridges form between cysteine 69–cysteine 78 and cysteine 119–cysteine 124.

This sequence belongs to the neocarzinostatin family.

Binds non-covalently to a chromophore which is the cytotoxic and mutagenic component of the antibiotic. The chromophore binds to DNA as a weak intercalator and causes single- and double-strand breaks. The sequence is that of Antitumor antibiotic C-1027 apoprotein (cagA) from Streptomyces globisporus.